The following is a 160-amino-acid chain: Large ribosomal subunit protein uL22c (160 aa).

It belongs to the universal ribosomal protein uL22 family. In terms of assembly, part of the 50S ribosomal subunit.

The protein resides in the plastid. It is found in the chloroplast. Its function is as follows. This protein binds specifically to 23S rRNA. In terms of biological role, the globular domain of the protein is located near the polypeptide exit tunnel on the outside of the subunit, while an extended beta-hairpin is found that lines the wall of the exit tunnel in the center of the 70S ribosome. The polypeptide is Large ribosomal subunit protein uL22c (rpl22) (Eucalyptus globulus subsp. globulus (Tasmanian blue gum)).